The chain runs to 108 residues: Complement inhibitor CirpT4 (108 aa).

Positions 1-19 (MRAFVALFCTLVAFATVIC) are cleaved as a signal peptide. Disulfide bonds link C40/C64, C59/C98, C76/C99, and C85/C104.

The protein belongs to the CirpT family. Expressed in salivary glands.

It localises to the secreted. Complement inhibitor. Prevents complement-mediated activation of C5 by sterically preventing direct binding of C5 to its convertase (binding with domains MG4 and MG5). Binds C5 at a different binding site than the other tick complement inhibitors OmCI and RaCI3, and the drug eculizumab. Inhibits the complement in human, rat and guinea pig, and also shows a reduced inhibition in rabbit and pig. The protein is Complement inhibitor CirpT4 of Amblyomma americanum (Lone star tick).